We begin with the raw amino-acid sequence, 156 residues long: Small ribosomal subunit protein uS7 (156 aa).

It belongs to the universal ribosomal protein uS7 family. As to quaternary structure, part of the 30S ribosomal subunit. Contacts proteins S9 and S11.

In terms of biological role, one of the primary rRNA binding proteins, it binds directly to 16S rRNA where it nucleates assembly of the head domain of the 30S subunit. Is located at the subunit interface close to the decoding center, probably blocks exit of the E-site tRNA. This Clostridium novyi (strain NT) protein is Small ribosomal subunit protein uS7.